We begin with the raw amino-acid sequence, 317 residues long: Probable deoxyhypusine synthase (317 aa).

The active-site Nucleophile is K285.

It belongs to the deoxyhypusine synthase family. The cofactor is NAD(+).

It catalyses the reaction [eIF5A protein]-L-lysine + spermidine = [eIF5A protein]-deoxyhypusine + propane-1,3-diamine. It participates in protein modification; eIF5A hypusination. Functionally, catalyzes the NAD-dependent oxidative cleavage of spermidine and the subsequent transfer of the butylamine moiety of spermidine to the epsilon-amino group of a specific lysine residue of the eIF-5A precursor protein to form the intermediate deoxyhypusine residue. The sequence is that of Probable deoxyhypusine synthase (dys) from Methanosarcina thermophila.